Consider the following 396-residue polypeptide: MAKAKFERTKPHVNIGTIGHVDHGKTTLTAAITKVLHDKYPELNESRAFDQIDNAPEERQRGITINISHVEYQTEKRHYAHVDAPGHADYIKNMITGAAQMDGAILVVAATDGPMPQTREHVLLARQVGVPYILVALNKADAVDDEELIELVEMEVRELLAAQDFDEDAPVVRVSALKALEGDEKWVKSVEELMDAVDESIPDPVRDTDRPFLMPVEDVFTITGRGTVVTGRVERGVVNVNEEVEIVGIRPGTTKTTVTGVEMFRKLLDQGQAGDNVGLLLRGIKREDVERGQVVVKPGTTTPHTEFDGQVYILSKDEGGRHTPFFNNYRPQFYFRTTDVTGVVTLPEGTEMVMPGDNTDISVKLIQPVAMDEGLRFAIREGGRTVGAGRVTKIHK.

Residues 10-205 (KPHVNIGTIG…AVDESIPDPV (196 aa)) form the tr-type G domain. A G1 region spans residues 19 to 26 (GHVDHGKT). 19-26 (GHVDHGKT) is a GTP binding site. A Mg(2+)-binding site is contributed by Thr-26. The segment at 62–66 (GITIN) is G2. The segment at 83–86 (DAPG) is G3. GTP-binding positions include 83–87 (DAPGH) and 138–141 (NKAD). A G4 region spans residues 138–141 (NKAD). The interval 175–177 (SAL) is G5.

The protein belongs to the TRAFAC class translation factor GTPase superfamily. Classic translation factor GTPase family. EF-Tu/EF-1A subfamily. Monomer.

The protein localises to the cytoplasm. The enzyme catalyses GTP + H2O = GDP + phosphate + H(+). Functionally, GTP hydrolase that promotes the GTP-dependent binding of aminoacyl-tRNA to the A-site of ribosomes during protein biosynthesis. The sequence is that of Elongation factor Tu from Mycobacterium sp. (strain JLS).